The following is a 398-amino-acid chain: Aspartic protease 3 (398 aa).

A signal peptide spans 1-17 (MSGRVFLLLALVALASA). Residues 18–55 (IQRIKLEKRTYTREQYKFGSIQEHLKAKYVPGYIPNKD) constitute a propeptide, removed in mature form. Positions 69-392 (YYGPVTIGTP…DHGNKRVGFA (324 aa)) constitute a Peptidase A1 domain. Asp-87 is a catalytic residue. An intrachain disulfide couples Cys-100 to Cys-107. Asp-279 is an active-site residue. Cysteines 313 and 351 form a disulfide. An N-linked (GlcNAc...) asparagine glycan is attached at Asn-321.

The protein belongs to the peptidase A1 family. Highly expressed in intestine and to a lower extent in body wall muscles, hypodermis and neurons.

It is found in the cytoplasm. The protein resides in the lysosome. The protein localises to the secreted. In terms of biological role, aspartic protease. Part of the necrosis cell death pathway. Involved in neuronal cell degeneration. Involved in heat stress response. This Caenorhabditis elegans protein is Aspartic protease 3.